Here is a 248-residue protein sequence, read N- to C-terminus: Probable transcriptional regulatory protein Ecaj_0351 (248 aa).

The disordered stretch occupies residues 1–21 (MAGHSQFANIKHRKGAQDAKR).

It belongs to the TACO1 family.

Its subcellular location is the cytoplasm. In Ehrlichia canis (strain Jake), this protein is Probable transcriptional regulatory protein Ecaj_0351.